Reading from the N-terminus, the 577-residue chain is Nuclear fusion protein tht1 (577 aa).

Positions 1-29 (MKFHPTRPFGLYFEFFIIISFFFTSESTG) are cleaved as a signal peptide. Over 30–404 (DVESFMKYSN…MNVYFKGLSN (375 aa)) the chain is Lumenal. N-linked (GlcNAc...) asparagine glycosylation is found at N163 and N372. A helical transmembrane segment spans residues 405-425 (IISSFAFIGFTLFATLSSLFF). Residues 426 to 433 (KVLKIHRR) lie on the Cytoplasmic side of the membrane. Residues 434 to 454 (PIIVFGSLSIIFIHIYCFKIT) form a helical membrane-spanning segment. The Lumenal segment spans residues 455-470 (SWVNLYGWITCTIART). Residues 471–491 (LSFIKLNIRTFYLTAFLCALL) traverse the membrane as a helical segment. The Cytoplasmic segment spans residues 492–577 (NFLRYLKYRN…ESLEQSPWWD (86 aa)).

It belongs to the KAR5 family. Post-translationally, N-glycosylated.

It is found in the endoplasmic reticulum membrane. Its subcellular location is the nucleus membrane. Functionally, required for nuclear membrane fusion during karyogamy. This is Nuclear fusion protein tht1 (tht1) from Schizosaccharomyces pombe (strain 972 / ATCC 24843) (Fission yeast).